Here is an 842-residue protein sequence, read N- to C-terminus: Non-motile and phage-resistance protein (842 aa).

Helical transmembrane passes span 29–50, 283–303, and 343–363; these read VFVR…AFGV, GAFS…LLMI, and VYLS…VVSG. Residues 318-389 form the PAS domain; the sequence is SERRFRLAVE…QALANAAMYG (72 aa). The 224-residue stretch at 607-830 folds into the Histidine kinase domain; sequence NMSHELRTPL…TVSFTLPVRH (224 aa). His610 carries the post-translational modification Phosphohistidine; by autocatalysis.

The protein resides in the cell membrane. It catalyses the reaction ATP + protein L-histidine = ADP + protein N-phospho-L-histidine.. Functionally, member of the two-component regulatory system involved in the regulation of polar organelle development. PleC functions as a membrane-associated protein kinase that transfers phosphate to the response regulator PleD, leading to its activation. This is Non-motile and phage-resistance protein (pleC) from Caulobacter vibrioides (strain ATCC 19089 / CIP 103742 / CB 15) (Caulobacter crescentus).